Reading from the N-terminus, the 780-residue chain is Nuclear cap-binding protein subunit 1 (780 aa).

The interval 1–25 (MSSYRGSTRPRKRTREGENYGFRPH) is disordered. Residue Ser-29 is modified to Phosphoserine. Residues 34-249 (AARIKKDITF…KQLILSREND (216 aa)) enclose the MIF4G domain. A disordered region spans residues 738 to 780 (ANEPVQENTSEEQEDTKMQPVDAVDEQPSENNQTAADATNEEK).

It belongs to the NCBP1 family. As to quaternary structure, component of the nuclear cap-binding complex (CBC), a heterodimer composed of cbc1 and cbc2 that interacts with capped RNAs.

The protein resides in the cytoplasm. It is found in the perinuclear region. Its subcellular location is the nucleus. In terms of biological role, component of the CBC complex, which binds cotranscriptionally to the 5'-cap of pre-mRNAs and is involved in maturation, export and degradation of nuclear mRNAs. In Schizosaccharomyces pombe (strain 972 / ATCC 24843) (Fission yeast), this protein is Nuclear cap-binding protein subunit 1 (cbc1).